A 138-amino-acid chain; its full sequence is Nucleoside diphosphate kinase (138 aa).

Lysine 10, phenylalanine 58, arginine 86, threonine 92, arginine 103, and asparagine 113 together coordinate ATP. Histidine 116 functions as the Pros-phosphohistidine intermediate in the catalytic mechanism.

It belongs to the NDK family. In terms of assembly, homotetramer. It depends on Mg(2+) as a cofactor.

The protein localises to the cytoplasm. The enzyme catalyses a 2'-deoxyribonucleoside 5'-diphosphate + ATP = a 2'-deoxyribonucleoside 5'-triphosphate + ADP. The catalysed reaction is a ribonucleoside 5'-diphosphate + ATP = a ribonucleoside 5'-triphosphate + ADP. Its function is as follows. Major role in the synthesis of nucleoside triphosphates other than ATP. The ATP gamma phosphate is transferred to the NDP beta phosphate via a ping-pong mechanism, using a phosphorylated active-site intermediate. This is Nucleoside diphosphate kinase from Actinobacillus pleuropneumoniae serotype 7 (strain AP76).